Here is a 248-residue protein sequence, read N- to C-terminus: Myelin protein P0 (248 aa).

Residues 1–29 (MAPGAPSSSPSPILAALLFSSLVLSPALA) form the signal peptide. An Ig-like V-type domain is found at 30-143 (IVVYTDREIY…DIVGKTSQVT (114 aa)). The Extracellular segment spans residues 30-153 (IVVYTDREIY…LYVFEKVPTR (124 aa)). A disulfide bridge connects residues cysteine 50 and cysteine 127. An N-linked (GlcNAc...) (complex) asparagine glycan is attached at asparagine 122. Residues 154 to 179 (YGVVLGAVIGGILGVVLLLLLLFYLI) form a helical membrane-spanning segment. Residues 180–248 (RYCWLRRQAA…GLGESRKDKK (69 aa)) are Cytoplasmic-facing. Serine 210 carries the phosphoserine; by PKC modification. The tract at residues 222–248 (MLDHSRSTKAASEKKSKGLGESRKDKK) is disordered. Basic and acidic residues predominate over residues 224-248 (DHSRSTKAASEKKSKGLGESRKDKK). Phosphoserine is present on residues serine 226 and serine 228. Serine 233 carries the post-translational modification Phosphoserine; by PKC. 2 positions are modified to phosphoserine: serine 237 and serine 243.

It belongs to the myelin P0 protein family. In terms of assembly, homodimer and homotetramer. N-glycosylated; contains sulfate-substituted glycan. Found only in peripheral nervous system Schwann cells.

The protein resides in the cell membrane. In terms of biological role, is an adhesion molecule necessary for normal myelination in the peripheral nervous system. It mediates adhesion between adjacent myelin wraps and ultimately drives myelin compaction. This Mus musculus (Mouse) protein is Myelin protein P0 (Mpz).